We begin with the raw amino-acid sequence, 99 residues long: Integration host factor subunit alpha (99 aa).

Residues 49–71 (FGNFDLRDKNQRPGRNPKTGEDI) are disordered.

It belongs to the bacterial histone-like protein family. As to quaternary structure, heterodimer of an alpha and a beta chain.

In terms of biological role, this protein is one of the two subunits of integration host factor, a specific DNA-binding protein that functions in genetic recombination as well as in transcriptional and translational control. In Shewanella frigidimarina (strain NCIMB 400), this protein is Integration host factor subunit alpha.